The following is a 172-amino-acid chain: ATP synthase subunit b (172 aa).

A helical membrane pass occupies residues 12-32; sequence SLYIGDLVFYIVTFIILMLLV. Composition is skewed to basic and acidic residues over residues 63-74 and 116-131; these read ESAEKMAAKRQA and AQKDAEQARRDALNSA. Residues 63–131 are disordered; it reads ESAEKMAAKR…QARRDALNSA (69 aa).

Belongs to the ATPase B chain family. As to quaternary structure, F-type ATPases have 2 components, F(1) - the catalytic core - and F(0) - the membrane proton channel. F(1) has five subunits: alpha(3), beta(3), gamma(1), delta(1), epsilon(1). F(0) has three main subunits: a(1), b(2) and c(10-14). The alpha and beta chains form an alternating ring which encloses part of the gamma chain. F(1) is attached to F(0) by a central stalk formed by the gamma and epsilon chains, while a peripheral stalk is formed by the delta and b chains.

The protein localises to the cell membrane. Functionally, f(1)F(0) ATP synthase produces ATP from ADP in the presence of a proton or sodium gradient. F-type ATPases consist of two structural domains, F(1) containing the extramembraneous catalytic core and F(0) containing the membrane proton channel, linked together by a central stalk and a peripheral stalk. During catalysis, ATP synthesis in the catalytic domain of F(1) is coupled via a rotary mechanism of the central stalk subunits to proton translocation. Component of the F(0) channel, it forms part of the peripheral stalk, linking F(1) to F(0). This Limosilactobacillus reuteri (strain DSM 20016) (Lactobacillus reuteri) protein is ATP synthase subunit b.